Here is a 61-residue protein sequence, read N- to C-terminus: Small ribosomal subunit protein uS14B (61 aa).

Zn(2+) contacts are provided by Cys24, Cys27, Cys40, and Cys43.

It belongs to the universal ribosomal protein uS14 family. Zinc-binding uS14 subfamily. Part of the 30S ribosomal subunit. Contacts proteins S3 and S10. Requires Zn(2+) as cofactor.

Functionally, binds 16S rRNA, required for the assembly of 30S particles and may also be responsible for determining the conformation of the 16S rRNA at the A site. This is Small ribosomal subunit protein uS14B from Nocardia farcinica (strain IFM 10152).